Consider the following 418-residue polypeptide: Elongation factor 1-gamma 2 (418 aa).

A GST N-terminal domain is found at 1-82 (MALVLHAGSG…YVTRSKADNP (82 aa)). Residues 87–215 (SLIEYAHIEQ…VKQAESVPPV (129 aa)) form the GST C-terminal domain. The interval 210–265 (ESVPPVQKKAPPPKEQKPKEAKKEAPKEAPKPKAVEKPEEEEEAPKPKPKNPLDLL) is disordered. Basic and acidic residues predominate over residues 221 to 246 (PPKEQKPKEAKKEAPKEAPKPKAVEK). Residues 258-418 (PKNPLDLLPP…ESLLDAKCFK (161 aa)) enclose the EF-1-gamma C-terminal domain.

EF-1 is composed of four subunits: alpha, beta, delta, and gamma.

Functionally, probably plays a role in anchoring the complex to other cellular components. The protein is Elongation factor 1-gamma 2 of Oryza sativa subsp. japonica (Rice).